A 145-amino-acid polypeptide reads, in one-letter code: Immunity protein CdiI (145 aa).

In terms of assembly, interacts with cognate toxin fragment CdiA-CT.

Immunity protein component of a toxin-immunity protein module, which functions as a cellular contact-dependent growth inhibition (CDI) system. CDI modules allow bacteria to communicate with and inhibit the growth of closely related neighboring bacteria in a contact-dependent fashion. Protects cells against the 16S rRNase activity of CdiA-CT, its cognate toxin protein, but not against the toxic effects of a similar rRNase, non-cognate CdiA-CT from E.chrysanthemi strain EC16. This is Immunity protein CdiI from Enterobacter cloacae subsp. cloacae (strain ATCC 13047 / DSM 30054 / NBRC 13535 / NCTC 10005 / WDCM 00083 / NCDC 279-56).